A 243-amino-acid chain; its full sequence is Pyrimidodiazepine synthase (243 aa).

Residues 20 to 102 (GILRLYSMRF…YLDEQYPLRP (83 aa)) form the GST N-terminal domain. Cys-30 functions as the Nucleophile in the catalytic mechanism. Glutathione-binding positions include Lys-57, Val-70, and 86–87 (ES). The region spanning 107–230 (DPLKKVQDKL…VQAEFLRTRS (124 aa)) is the GST C-terminal domain.

It belongs to the GST superfamily. Omega family. Homodimer.

The catalysed reaction is 2-amino-6-acetyl-3,7,8,9-tetrahydro-3H-pyrimido[4,5-b][1,4]diazepin-4-one + glutathione disulfide + H2O = 6-pyruvoyl-5,6,7,8-tetrahydropterin + 2 glutathione. Functionally, mediates the conversion of 2-amino-4-oxo-6-pyruvoyl-5,6,7,8-tetrahydropteridine (6-PTP; also named 6-pyruvoyltetrahydropterin) to 2-amino-6-acetyl-3,7,8,9-tetrahydro-3H-pyrimido(4,5-b)[1,4]diazepin-4-one (pyrimidodiazepine or PDA), a key intermediate in red eye pigment drosopterin biosynthesis. This Drosophila melanogaster (Fruit fly) protein is Pyrimidodiazepine synthase.